A 229-amino-acid polypeptide reads, in one-letter code: Uracil-DNA glycosylase (229 aa).

Asp65 acts as the Proton acceptor in catalysis.

The protein belongs to the uracil-DNA glycosylase (UDG) superfamily. UNG family.

Its subcellular location is the cytoplasm. The catalysed reaction is Hydrolyzes single-stranded DNA or mismatched double-stranded DNA and polynucleotides, releasing free uracil.. Functionally, excises uracil residues from the DNA which can arise as a result of misincorporation of dUMP residues by DNA polymerase or due to deamination of cytosine. This Brevibacillus brevis (strain 47 / JCM 6285 / NBRC 100599) protein is Uracil-DNA glycosylase.